Here is a 153-residue protein sequence, read N- to C-terminus: 3-dehydroquinate dehydratase (153 aa).

The active-site Proton acceptor is the Tyr-26. Residues Asn-77, His-83, and Asp-90 each coordinate substrate. Residue His-103 is the Proton donor of the active site. Substrate is bound by residues 104 to 105 (LS) and Arg-114.

The protein belongs to the type-II 3-dehydroquinase family. Homododecamer.

The catalysed reaction is 3-dehydroquinate = 3-dehydroshikimate + H2O. It participates in metabolic intermediate biosynthesis; chorismate biosynthesis; chorismate from D-erythrose 4-phosphate and phosphoenolpyruvate: step 3/7. Functionally, catalyzes a trans-dehydration via an enolate intermediate. The sequence is that of 3-dehydroquinate dehydratase from Colwellia psychrerythraea (strain 34H / ATCC BAA-681) (Vibrio psychroerythus).